The chain runs to 313 residues: 4-diphosphocytidyl-2-C-methyl-D-erythritol kinase (313 aa).

Residue K10 is part of the active site. 95-105 (PVTAGLGGGSS) serves as a coordination point for ATP. D136 is an active-site residue. The interval 289 to 313 (HPRVSPWRSPRSASSPSTRRSSRPT) is disordered. The segment covering 292-307 (VSPWRSPRSASSPSTR) has biased composition (low complexity).

The protein belongs to the GHMP kinase family. IspE subfamily.

The catalysed reaction is 4-CDP-2-C-methyl-D-erythritol + ATP = 4-CDP-2-C-methyl-D-erythritol 2-phosphate + ADP + H(+). It participates in isoprenoid biosynthesis; isopentenyl diphosphate biosynthesis via DXP pathway; isopentenyl diphosphate from 1-deoxy-D-xylulose 5-phosphate: step 3/6. In terms of biological role, catalyzes the phosphorylation of the position 2 hydroxy group of 4-diphosphocytidyl-2C-methyl-D-erythritol. In Anaeromyxobacter dehalogenans (strain 2CP-C), this protein is 4-diphosphocytidyl-2-C-methyl-D-erythritol kinase.